The primary structure comprises 678 residues: Penicillin-binding protein activator LpoA (678 aa).

The signal sequence occupies residues 1–26; it reads MVPSTFSRLKAARCLPVVLAALIFAG. Cys27 carries the N-palmitoyl cysteine lipid modification. A lipid anchor (S-diacylglycerol cysteine) is attached at Cys27. Residues 300-310 show a composition bias toward low complexity; the sequence is AADVAEQPQPQ. 2 disordered regions span residues 300 to 340 and 496 to 528; these read AADV…PVSA and ALTG…DDQF. Residues 311–327 are compositionally biased toward polar residues; sequence TADSVASPAQASVSDLT. Composition is skewed to low complexity over residues 330–340 and 513–528; these read QPAAQPVPVSA and TTNN…DDQF.

It belongs to the LpoA family. In terms of assembly, interacts with PBP1a.

It is found in the cell outer membrane. In terms of biological role, regulator of peptidoglycan synthesis that is essential for the function of penicillin-binding protein 1A (PBP1a). The polypeptide is Penicillin-binding protein activator LpoA (Shigella flexneri serotype X (strain 2002017)).